We begin with the raw amino-acid sequence, 210 residues long: Orotate phosphoribosyltransferase (210 aa).

Residues R94, K98, H100, and 120–128 (EDLISTGGS) contribute to the 5-phospho-alpha-D-ribose 1-diphosphate site. Residue S124 participates in orotate binding.

The protein belongs to the purine/pyrimidine phosphoribosyltransferase family. PyrE subfamily. Homodimer. It depends on Mg(2+) as a cofactor.

The enzyme catalyses orotidine 5'-phosphate + diphosphate = orotate + 5-phospho-alpha-D-ribose 1-diphosphate. It participates in pyrimidine metabolism; UMP biosynthesis via de novo pathway; UMP from orotate: step 1/2. Functionally, catalyzes the transfer of a ribosyl phosphate group from 5-phosphoribose 1-diphosphate to orotate, leading to the formation of orotidine monophosphate (OMP). This chain is Orotate phosphoribosyltransferase, found in Bacillus cytotoxicus (strain DSM 22905 / CIP 110041 / 391-98 / NVH 391-98).